The following is a 146-amino-acid chain: UPF0735 ACT domain-containing protein CHY_1913 (146 aa).

An ACT domain is found at 70–145 (TLALNLEHRA…GVSKVELVGQ (76 aa)).

It belongs to the UPF0735 family.

In Carboxydothermus hydrogenoformans (strain ATCC BAA-161 / DSM 6008 / Z-2901), this protein is UPF0735 ACT domain-containing protein CHY_1913.